The chain runs to 255 residues: uncharacterized protein (255 aa).

Positions 1–23 are cleaved as a signal peptide; it reads MKRLNKLVLGIIFLFLVISITAG. Residue Cys24 is the site of N-palmitoyl cysteine attachment. The S-diacylglycerol cysteine moiety is linked to residue Cys24.

Belongs to the staphylococcal tandem lipoprotein family.

The protein resides in the cell membrane. This is an uncharacterized protein from Staphylococcus aureus (strain USA300).